We begin with the raw amino-acid sequence, 169 residues long: Large ribosomal subunit protein uL10 (169 aa).

Belongs to the universal ribosomal protein uL10 family. Part of the ribosomal stalk of the 50S ribosomal subunit. The N-terminus interacts with L11 and the large rRNA to form the base of the stalk. The C-terminus forms an elongated spine to which L12 dimers bind in a sequential fashion forming a multimeric L10(L12)X complex.

In terms of biological role, forms part of the ribosomal stalk, playing a central role in the interaction of the ribosome with GTP-bound translation factors. The sequence is that of Large ribosomal subunit protein uL10 from Rickettsia typhi (strain ATCC VR-144 / Wilmington).